Here is a 213-residue protein sequence, read N- to C-terminus: Phycocyanobilin lyase subunit beta (213 aa).

It belongs to the CpcE/RpcE/PecE family. In terms of assembly, cpcE and CpcF associate to form a lyase.

Functionally, required for the chromophorylation of the CpcA gene product. The protein is Phycocyanobilin lyase subunit beta (cpcF) of Thermosynechococcus vestitus (strain NIES-2133 / IAM M-273 / BP-1).